A 344-amino-acid polypeptide reads, in one-letter code: Putative 2-hydroxyacid dehydrogenase YoaD (344 aa).

Asp193 is an NAD(+) binding site. Arg251 is an active-site residue. Residue Asp275 coordinates NAD(+). Glu280 is a catalytic residue. The active-site Proton donor is His300.

It belongs to the D-isomer specific 2-hydroxyacid dehydrogenase family.

The chain is Putative 2-hydroxyacid dehydrogenase YoaD (yoaD) from Bacillus subtilis (strain 168).